The primary structure comprises 257 residues: Metallo-beta-lactamase type 2 (257 aa).

The N-terminal stretch at 1–30 (MKKNTLLKVGLCVSLLGTTQFVSTISSVQA) is a signal peptide. Zn(2+) contacts are provided by His-116, His-118, Asp-120, His-179, and Cys-198. Residues Lys-201 and Asn-210 each coordinate substrate. His-240 contributes to the Zn(2+) binding site.

This sequence belongs to the metallo-beta-lactamase superfamily. Class-B beta-lactamase family. Monomer. Zn(2+) serves as cofactor.

The protein resides in the periplasm. It carries out the reaction a beta-lactam + H2O = a substituted beta-amino acid. Confers resistance to the different beta-lactams antibiotics (penicillin, cephalosporin and carbapenem) via the hydrolysis of the beta-lactam ring. The chain is Metallo-beta-lactamase type 2 from Bacillus sp. (strain 170).